Consider the following 96-residue polypeptide: Large ribosomal subunit protein uL23 (96 aa).

The protein belongs to the universal ribosomal protein uL23 family. As to quaternary structure, part of the 50S ribosomal subunit. Contacts protein L29, and trigger factor when it is bound to the ribosome.

In terms of biological role, one of the early assembly proteins it binds 23S rRNA. One of the proteins that surrounds the polypeptide exit tunnel on the outside of the ribosome. Forms the main docking site for trigger factor binding to the ribosome. The polypeptide is Large ribosomal subunit protein uL23 (Caldicellulosiruptor saccharolyticus (strain ATCC 43494 / DSM 8903 / Tp8T 6331)).